Consider the following 462-residue polypeptide: MQKTWSDRFEEGLNPFIESFNASINFDFLLIEEDLDGSIAHARMLAKTGIITSEEADQLEAALQKIRLEASQGLFKPDISDEDVHMSVERRLISILGPLGKKLHTARSRNDQVGTDLRLWLRRRIDDIDIELKKLQVALFKKAEKNLLTLIPGYTHLQRAQPLSLAHHLLAYIEMLQRDRNRLADVRERVNICPLGAAALAGTSLPIDRAFTANQLGFTSIYSNSLDAVSDRDFTVEFTAAASLIMTHISRLADEIILWASEEFSFVRLTDRCSTGSSLMPQKKNPDVPELVRGKTGRVFGHLQSLLTMMKGLPLAYNKDFQEDKEAVFDTVKTVRDSLKAMTILLEEGLEFSLERLKETVEADFSNATDVADYLVSKNIPFREAYQIVGRVVRLCIQKKILLKDLTLKEWQEINTLIDHDIYEKITPEKVVAARISDGGTGFDRVREELEKWRNDLISLNQ.

This sequence belongs to the lyase 1 family. Argininosuccinate lyase subfamily.

It localises to the cytoplasm. The catalysed reaction is 2-(N(omega)-L-arginino)succinate = fumarate + L-arginine. It participates in amino-acid biosynthesis; L-arginine biosynthesis; L-arginine from L-ornithine and carbamoyl phosphate: step 3/3. This is Argininosuccinate lyase from Prochlorococcus marinus (strain SARG / CCMP1375 / SS120).